We begin with the raw amino-acid sequence, 415 residues long: AP-3 complex subunit mu (415 aa).

The MHD domain maps to 178-414; it reads SNEVYVDLVE…QTRAGEFDVR (237 aa).

It belongs to the adaptor complexes medium subunit family. Adaptor protein complex 3 (AP-3) is a heterotetramer composed of two large adaptins (delta-type subunit and beta-type subunit), a medium adaptin (mu-type subunit) and a small adaptin (sigma-type subunit).

Its subcellular location is the cytoplasm. The protein localises to the golgi apparatus. It localises to the cytoplasmic vesicle membrane. In terms of biological role, part of the AP-3 complex, an adaptor-related complex which seems to be clathrin-associated. The complex is associated with the Golgi region as well as more peripheral structures. It facilitates the budding of vesicles from the Golgi membrane and may be directly involved in trafficking to the vacuole. It also functions in maintaining the identity of lytic vacuoles and in regulating the transition between storage and lytic vacuoles. The polypeptide is AP-3 complex subunit mu (AP3M) (Arabidopsis thaliana (Mouse-ear cress)).